Reading from the N-terminus, the 351-residue chain is Rhodopsin (351 aa).

Residues 1 to 36 (MNGTEGPFFYIPMSNATGLVRSPYDYPQYYLVPPWG) are Extracellular-facing. 2 N-linked (GlcNAc...) asparagine glycosylation sites follow: asparagine 2 and asparagine 15. Residues 37–61 (YACLAAYMFLLILTGFPVNFLTLYV) traverse the membrane as a helical segment. Over 62-73 (TIEHKKLRSPLN) the chain is Cytoplasmic. The chain crosses the membrane as a helical span at residues 74–96 (YILLNLAVADLFMVIGGFTTTMW). Over 97 to 110 (TSLNGYFVFGRMGC) the chain is Extracellular. A disulfide bridge connects residues cysteine 110 and cysteine 187. The helical transmembrane segment at 111–133 (NIEGFFATLGGEIALWSLVVLSM) threads the bilayer. The short motif at 134–136 (ERW) is the 'Ionic lock' involved in activated form stabilization element. Residues 134–152 (ERWIVVCKPISNFRFGENH) lie on the Cytoplasmic side of the membrane. The helical transmembrane segment at 153 to 173 (AVMGVAFSWFMAAACAVPPLV) threads the bilayer. Over 174 to 202 (GWSRYIPEGMQCSCGIDYYTRAEGFNNES) the chain is Extracellular. Asparagine 200 is a glycosylation site (N-linked (GlcNAc...) asparagine). A helical transmembrane segment spans residues 203–224 (FVIYMFVVHFTCPLTIITFCYG). Residues 225 to 252 (RLVCTVKEAAAQQQESETTQRAEREVTR) are Cytoplasmic-facing. Residues 253 to 274 (MVIIMFVAFLACWVPYASVAWY) form a helical membrane-spanning segment. The Extracellular portion of the chain corresponds to 275–286 (IFTHQGSEFGPV). The chain crosses the membrane as a helical span at residues 287–308 (FMTIPAFFAKSSAVYNPVIYIC). Lysine 296 carries the post-translational modification N6-(retinylidene)lysine. Residues 309 to 351 (LNKQFRHCMITTLCCGKNPFEEEEGSTTASKTEASSVCSVSPA) are Cytoplasmic-facing. S-palmitoyl cysteine attachment occurs at residues cysteine 322 and cysteine 323. The disordered stretch occupies residues 330–351 (EEEGSTTASKTEASSVCSVSPA). The segment covering 334-351 (STTASKTEASSVCSVSPA) has biased composition (polar residues).

It belongs to the G-protein coupled receptor 1 family. Opsin subfamily. Post-translationally, phosphorylated on some or all of the serine and threonine residues present in the C-terminal region. In terms of processing, contains one covalently linked retinal chromophore.

The protein localises to the membrane. It is found in the cell projection. It localises to the cilium. Its subcellular location is the photoreceptor outer segment. Its function is as follows. Photoreceptor required for image-forming vision at low light intensity. While most salt water fish species use retinal as chromophore, most freshwater fish use 3-dehydroretinal, or a mixture of retinal and 3-dehydroretinal. Light-induced isomerization of 11-cis to all-trans retinal triggers a conformational change that activates signaling via G-proteins. Subsequent receptor phosphorylation mediates displacement of the bound G-protein alpha subunit by arrestin and terminates signaling. The chain is Rhodopsin (rho) from Sardina pilchardus (European pilchard).